Consider the following 157-residue polypeptide: uncharacterized protein (157 aa).

The signal sequence occupies residues 1 to 30; that stretch reads MLPEQGPQPSTMPLWCLLAACTSLPRQAAT.

It is found in the secreted. This is an uncharacterized protein from Homo sapiens (Human).